A 273-amino-acid chain; its full sequence is Putative phosphoenolpyruvate synthase regulatory protein (273 aa).

Residue 153–160 (AVSRAGKT) participates in ADP binding.

The protein belongs to the pyruvate, phosphate/water dikinase regulatory protein family. PSRP subfamily.

The enzyme catalyses [pyruvate, water dikinase] + ADP = [pyruvate, water dikinase]-phosphate + AMP + H(+). The catalysed reaction is [pyruvate, water dikinase]-phosphate + phosphate + H(+) = [pyruvate, water dikinase] + diphosphate. In terms of biological role, bifunctional serine/threonine kinase and phosphorylase involved in the regulation of the phosphoenolpyruvate synthase (PEPS) by catalyzing its phosphorylation/dephosphorylation. The sequence is that of Putative phosphoenolpyruvate synthase regulatory protein from Xylella fastidiosa (strain M23).